Here is a 419-residue protein sequence, read N- to C-terminus: Acyl-coenzyme A thioesterase 1 (419 aa).

Active-site charge relay system residues include serine 232, aspartate 324, and histidine 358. Residue serine 416 is modified to Phosphoserine.

Belongs to the C/M/P thioester hydrolase family. Monomer. As to expression, expressed in liver.

It localises to the cytoplasm. It is found in the cytosol. The catalysed reaction is hexadecanoyl-CoA + H2O = hexadecanoate + CoA + H(+). It catalyses the reaction dodecanoyl-CoA + H2O = dodecanoate + CoA + H(+). The enzyme catalyses tetradecanoyl-CoA + H2O = tetradecanoate + CoA + H(+). It carries out the reaction decanoyl-CoA + H2O = decanoate + CoA + H(+). The catalysed reaction is octadecanoyl-CoA + H2O = octadecanoate + CoA + H(+). It catalyses the reaction eicosanoyl-CoA + H2O = eicosanoate + CoA + H(+). The enzyme catalyses (9Z)-octadecenoyl-CoA + H2O = (9Z)-octadecenoate + CoA + H(+). It carries out the reaction (9Z)-hexadecenoyl-CoA + H2O = (9Z)-hexadecenoate + CoA + H(+). The catalysed reaction is (9E)-octadecenoyl-CoA + H2O = (9E)-octadecenoate + CoA + H(+). Its pathway is lipid metabolism; fatty acid metabolism. Catalyzes the hydrolysis of acyl-CoAs into free fatty acids and coenzyme A (CoASH), regulating their respective intracellular levels. More active towards saturated and unsaturated long chain fatty acyl-CoAs (C12-C20). In Rattus norvegicus (Rat), this protein is Acyl-coenzyme A thioesterase 1 (Acot1).